The chain runs to 199 residues: Elongation factor Ts (199 aa).

The segment at 82-85 is involved in Mg(2+) ion dislocation from EF-Tu; the sequence is TDFV.

The protein belongs to the EF-Ts family.

The protein localises to the cytoplasm. Functionally, associates with the EF-Tu.GDP complex and induces the exchange of GDP to GTP. It remains bound to the aminoacyl-tRNA.EF-Tu.GTP complex up to the GTP hydrolysis stage on the ribosome. This is Elongation factor Ts from Leptospira interrogans serogroup Icterohaemorrhagiae serovar Lai (strain 56601).